The primary structure comprises 30 residues: Cycloviolacin-H4 (30 aa).

The segment at residues 1 to 30 is a cross-link (cyclopeptide (Gly-Asn)); sequence GIPCAESCVWIPCTVTALLGCSCSNNVCYN. Intrachain disulfides connect Cys-4-Cys-21, Cys-8-Cys-23, and Cys-13-Cys-28.

Post-translationally, this is a cyclic peptide.

In terms of biological role, probably participates in a plant defense mechanism. Has potent hemolytic activity. The protein is Cycloviolacin-H4 of Viola hederacea (Australian violet).